Reading from the N-terminus, the 354-residue chain is Uroporphyrinogen decarboxylase (354 aa).

Substrate contacts are provided by residues 27–31 (RQAGR), Asp-77, Tyr-154, Thr-209, and His-327.

It belongs to the uroporphyrinogen decarboxylase family. In terms of assembly, homodimer.

The protein resides in the cytoplasm. It catalyses the reaction uroporphyrinogen III + 4 H(+) = coproporphyrinogen III + 4 CO2. The protein operates within porphyrin-containing compound metabolism; protoporphyrin-IX biosynthesis; coproporphyrinogen-III from 5-aminolevulinate: step 4/4. Catalyzes the decarboxylation of four acetate groups of uroporphyrinogen-III to yield coproporphyrinogen-III. The chain is Uroporphyrinogen decarboxylase from Cronobacter sakazakii (strain ATCC BAA-894) (Enterobacter sakazakii).